A 512-amino-acid polypeptide reads, in one-letter code: Probable DNA ligase (512 aa).

Residue Glu-208 participates in ATP binding. Lys-210 (N6-AMP-lysine intermediate) is an active-site residue. ATP-binding residues include Arg-215, Arg-230, Glu-259, Phe-299, Arg-374, and Lys-380.

The protein belongs to the ATP-dependent DNA ligase family. Requires Mg(2+) as cofactor.

The enzyme catalyses ATP + (deoxyribonucleotide)n-3'-hydroxyl + 5'-phospho-(deoxyribonucleotide)m = (deoxyribonucleotide)n+m + AMP + diphosphate.. DNA ligase that seals nicks in double-stranded DNA during DNA replication, DNA recombination and DNA repair. The sequence is that of Probable DNA ligase from Streptomyces coelicolor (strain ATCC BAA-471 / A3(2) / M145).